The sequence spans 181 residues: TATA-box-binding protein (181 aa).

2 tandem repeats follow at residues 7–83 and 98–173.

Belongs to the TBP family.

Its function is as follows. General factor that plays a role in the activation of archaeal genes transcribed by RNA polymerase. Binds specifically to the TATA box promoter element which lies close to the position of transcription initiation. The protein is TATA-box-binding protein of Methanococcus maripaludis (strain C6 / ATCC BAA-1332).